A 291-amino-acid polypeptide reads, in one-letter code: 4-hydroxy-tetrahydrodipicolinate synthase (291 aa).

A pyruvate-binding site is contributed by threonine 45. The Proton donor/acceptor role is filled by tyrosine 131. Residue lysine 159 is the Schiff-base intermediate with substrate of the active site. Pyruvate is bound at residue isoleucine 202.

It belongs to the DapA family. Homotetramer; dimer of dimers.

Its subcellular location is the cytoplasm. It carries out the reaction L-aspartate 4-semialdehyde + pyruvate = (2S,4S)-4-hydroxy-2,3,4,5-tetrahydrodipicolinate + H2O + H(+). It functions in the pathway amino-acid biosynthesis; L-lysine biosynthesis via DAP pathway; (S)-tetrahydrodipicolinate from L-aspartate: step 3/4. Catalyzes the condensation of (S)-aspartate-beta-semialdehyde [(S)-ASA] and pyruvate to 4-hydroxy-tetrahydrodipicolinate (HTPA). The protein is 4-hydroxy-tetrahydrodipicolinate synthase of Methanosarcina acetivorans (strain ATCC 35395 / DSM 2834 / JCM 12185 / C2A).